A 722-amino-acid chain; its full sequence is Ribosomal RNA large subunit methyltransferase K/L (722 aa).

The THUMP domain occupies 43 to 154; the sequence is IGLRACLWSR…GNEGRVGIDL (112 aa).

The protein belongs to the methyltransferase superfamily. RlmKL family.

The protein resides in the cytoplasm. It catalyses the reaction guanosine(2445) in 23S rRNA + S-adenosyl-L-methionine = N(2)-methylguanosine(2445) in 23S rRNA + S-adenosyl-L-homocysteine + H(+). The catalysed reaction is guanosine(2069) in 23S rRNA + S-adenosyl-L-methionine = N(2)-methylguanosine(2069) in 23S rRNA + S-adenosyl-L-homocysteine + H(+). Specifically methylates the guanine in position 2445 (m2G2445) and the guanine in position 2069 (m7G2069) of 23S rRNA. The chain is Ribosomal RNA large subunit methyltransferase K/L from Magnetococcus marinus (strain ATCC BAA-1437 / JCM 17883 / MC-1).